A 240-amino-acid polypeptide reads, in one-letter code: Probable xyloglucan-specific endo-beta-1,4-glucanase A (240 aa).

An N-terminal signal peptide occupies residues 1–15 (MKFLTPLVLSSLASA).

This sequence belongs to the glycosyl hydrolase 12 (cellulase H) family.

It is found in the secreted. The enzyme catalyses xyloglucan + H2O = xyloglucan oligosaccharides.. Catalyzes endohydrolysis of 1,4-beta-D-glucosidic linkages in xyloglucan with retention of the beta-configuration of the glycosyl residues. Specific for xyloglucan and does not hydrolyze other cell wall components. The polypeptide is Probable xyloglucan-specific endo-beta-1,4-glucanase A (xgeA) (Aspergillus oryzae (strain ATCC 42149 / RIB 40) (Yellow koji mold)).